A 106-amino-acid polypeptide reads, in one-letter code: ATP-dependent Clp protease adapter protein ClpS (106 aa).

This sequence belongs to the ClpS family. Binds to the N-terminal domain of the chaperone ClpA.

In terms of biological role, involved in the modulation of the specificity of the ClpAP-mediated ATP-dependent protein degradation. The chain is ATP-dependent Clp protease adapter protein ClpS from Edwardsiella ictaluri (strain 93-146).